A 431-amino-acid polypeptide reads, in one-letter code: Glutamate-1-semialdehyde 2,1-aminomutase (431 aa).

Position 269 is an N6-(pyridoxal phosphate)lysine (Lys269).

The protein belongs to the class-III pyridoxal-phosphate-dependent aminotransferase family. HemL subfamily. In terms of assembly, homodimer. Requires pyridoxal 5'-phosphate as cofactor.

It localises to the cytoplasm. The enzyme catalyses (S)-4-amino-5-oxopentanoate = 5-aminolevulinate. It functions in the pathway porphyrin-containing compound metabolism; protoporphyrin-IX biosynthesis; 5-aminolevulinate from L-glutamyl-tRNA(Glu): step 2/2. The protein is Glutamate-1-semialdehyde 2,1-aminomutase of Francisella tularensis subsp. holarctica (strain FTNF002-00 / FTA).